We begin with the raw amino-acid sequence, 362 residues long: Putative transport protein BB_0006 (362 aa).

The next 8 membrane-spanning stretches (helical) occupy residues 20-40 (FYCI…EAVF), 43-63 (LAIS…LARF), 68-88 (FLIV…IFSF), 144-164 (EIIG…FLLS), 212-232 (ILVF…WAVL), 234-254 (FVFN…IVIT), 265-285 (IVLY…NILE), and 304-326 (LFFW…TVIV).

It belongs to the autoinducer-2 exporter (AI-2E) (TC 2.A.86) family.

The protein resides in the cell membrane. The protein is Putative transport protein BB_0006 of Borreliella burgdorferi (strain ATCC 35210 / DSM 4680 / CIP 102532 / B31) (Borrelia burgdorferi).